The primary structure comprises 57 residues: Large ribosomal subunit protein bL32A (57 aa).

The tract at residues 1-22 (MAVPARRTSKTKKRLRRTHEKL) is disordered. Residues 7 to 20 (RTSKTKKRLRRTHE) show a composition bias toward basic residues.

Belongs to the bacterial ribosomal protein bL32 family.

This Enterococcus faecalis (strain ATCC 700802 / V583) protein is Large ribosomal subunit protein bL32A (rpmF1).